We begin with the raw amino-acid sequence, 425 residues long: Enolase (425 aa).

Q162 is a binding site for (2R)-2-phosphoglycerate. Residue E204 is the Proton donor of the active site. Positions 241, 282, and 309 each coordinate Mg(2+). (2R)-2-phosphoglycerate contacts are provided by K334, R363, S364, and K385. K334 acts as the Proton acceptor in catalysis.

It belongs to the enolase family. It depends on Mg(2+) as a cofactor.

It is found in the cytoplasm. The protein localises to the secreted. It localises to the cell surface. The enzyme catalyses (2R)-2-phosphoglycerate = phosphoenolpyruvate + H2O. It functions in the pathway carbohydrate degradation; glycolysis; pyruvate from D-glyceraldehyde 3-phosphate: step 4/5. Functionally, catalyzes the reversible conversion of 2-phosphoglycerate (2-PG) into phosphoenolpyruvate (PEP). It is essential for the degradation of carbohydrates via glycolysis. The chain is Enolase from Corynebacterium efficiens (strain DSM 44549 / YS-314 / AJ 12310 / JCM 11189 / NBRC 100395).